The sequence spans 490 residues: Fumitremorgin C monooxygenase (490 aa).

A helical transmembrane segment spans residues 12–32 (LGVVGASLIVILGIILLFPLG). Cys442 is a binding site for heme.

It belongs to the cytochrome P450 family. Requires heme as cofactor.

The protein localises to the membrane. It carries out the reaction fumitremorgin C + 2 reduced [NADPH--hemoprotein reductase] + 2 O2 = 12alpha,13alpha-dihydroxyfumitremorgin C + 2 oxidized [NADPH--hemoprotein reductase] + 2 H2O + 2 H(+). It functions in the pathway mycotoxin biosynthesis. Cytochrome P450 monooxygenase; part of the gene cluster that mediates the biosynthesis of fumitremorgins, indole alkaloids that carry not only intriguing chemical structures, but also interesting biological and pharmacological activities. The biosynthesis of fumitremorgin-type alkaloids begins by condensation of the two amino acids L-tryptophan and L-proline to brevianamide F, catalyzed by the non-ribosomal peptide synthetase ftmA. Brevianamide F is then prenylated by the prenyltransferase ftmPT1/ftmB in the presence of dimethylallyl diphosphate, resulting in the formation of tryprostatin B. The three cytochrome P450 monooxygenases, ftmP450-1/ftmC, ftmP450-2/ftmE and ftmP450-3/FtmG, are responsible for the conversion of tryprostatin B to 6-hydroxytryprostatin B, tryprostatin A to fumitremorgin C and fumitremorgin C to 12,13-dihydroxyfumitremorgin C, respectively. The putative methyltransferase ftmMT/ftmD is expected for the conversion of 6-hydroxytryprostatin B to tryprostatin A. FtmPT2/FtmH catalyzes the prenylation of 12,13-dihydroxyfumitre-morgin C in the presence of dimethylallyl diphosphate, resulting in the formation of fumitremorgin B. Fumitremorgin B is further converted to verruculogen by ftmOx1/ftmF via the insertion of an endoperoxide bond between the two prenyl moieties. In some fungal species, verruculogen is further converted to fumitremorgin A, but the enzymes involved in this step have not been identified yet. The protein is Fumitremorgin C monooxygenase of Aspergillus fumigatus (strain ATCC MYA-4609 / CBS 101355 / FGSC A1100 / Af293) (Neosartorya fumigata).